The following is a 146-amino-acid chain: Basic phospholipase A2 beta-bungarotoxin A2 chain (146 aa).

Positions 1-19 (MNPAHLLVLSAVCVSLLGA) are cleaved as a signal peptide. The propeptide occupies 20–27 (SNIPPQSL). 6 disulfide bridges follow: Cys54/Cys145, Cys56/Cys72, Cys71/Cys126, Cys78/Cys119, Cys87/Cys112, and Cys105/Cys117. Ca(2+) contacts are provided by Tyr55, Gly57, and Gly59. His75 is an active-site residue. Asp76 is a binding site for Ca(2+). The active site involves Asp120.

The protein belongs to the phospholipase A2 family. Group I subfamily. D49 sub-subfamily. In terms of assembly, heterodimer; disulfide-linked. The A chain has phospholipase A2 activity and the B chain shows homology with the basic protease inhibitors. Ca(2+) is required as a cofactor. In terms of tissue distribution, expressed by the venom gland.

It is found in the secreted. The catalysed reaction is a 1,2-diacyl-sn-glycero-3-phosphocholine + H2O = a 1-acyl-sn-glycero-3-phosphocholine + a fatty acid + H(+). Its function is as follows. Snake venom phospholipase A2 (PLA2) that inhibits neuromuscular transmission by blocking acetylcholine release from the nerve termini. PLA2 catalyzes the calcium-dependent hydrolysis of the 2-acyl groups in 3-sn-phosphoglycerides. This is Basic phospholipase A2 beta-bungarotoxin A2 chain from Bungarus flaviceps flaviceps (Red-headed krait).